The primary structure comprises 467 residues: Chromosomal replication initiator protein DnaA (467 aa).

The tract at residues 1–85 is domain I, interacts with DnaA modulators; the sequence is MSLSLWQQCL…FEVGAKPASS (85 aa). The tract at residues 85-130 is domain II; it reads SLQKGAVSPAAAAIPAAQVQTARVAPTIVRPGWDNVPAPAEPTYRS. Residues 131-347 are domain III, AAA+ region; it reads NVNVKHTFDN…GALNRVIANA (217 aa). Residues Gly175, Gly177, Lys178, and Thr179 each coordinate ATP. Positions 348–467 are domain IV, binds dsDNA; that stretch reads NFTGRAITID…FSNLIRTLSS (120 aa).

Belongs to the DnaA family. Oligomerizes as a right-handed, spiral filament on DNA at oriC.

It localises to the cytoplasm. Its function is as follows. Plays an essential role in the initiation and regulation of chromosomal replication. ATP-DnaA binds to the origin of replication (oriC) to initiate formation of the DNA replication initiation complex once per cell cycle. Binds the DnaA box (a 9 base pair repeat at the origin) and separates the double-stranded (ds)DNA. Forms a right-handed helical filament on oriC DNA; dsDNA binds to the exterior of the filament while single-stranded (ss)DNA is stabiized in the filament's interior. The ATP-DnaA-oriC complex binds and stabilizes one strand of the AT-rich DNA unwinding element (DUE), permitting loading of DNA polymerase. After initiation quickly degrades to an ADP-DnaA complex that is not apt for DNA replication. Binds acidic phospholipids. The sequence is that of Chromosomal replication initiator protein DnaA from Klebsiella pneumoniae (strain 342).